A 288-amino-acid chain; its full sequence is Glucose-1-phosphate thymidylyltransferase (288 aa).

DTDP-alpha-D-glucose is bound at residue glycine 8. The dTTP site is built by glycine 8, glycine 11, threonine 12, arginine 13, lysine 23, glutamine 24, glutamine 80, glycine 85, and aspartate 108. 11 residues coordinate dTDP-alpha-D-glucose: lysine 23, glutamine 24, glutamine 80, glycine 85, aspartate 108, asparagine 109, glycine 143, glutamate 158, lysine 159, valine 169, and aspartate 222. Aspartate 108 is a Mg(2+) binding site. Residue aspartate 222 coordinates Mg(2+).

This sequence belongs to the glucose-1-phosphate thymidylyltransferase family. Requires Mg(2+) as cofactor.

It carries out the reaction dTTP + alpha-D-glucose 1-phosphate + H(+) = dTDP-alpha-D-glucose + diphosphate. Its pathway is carbohydrate biosynthesis; dTDP-L-rhamnose biosynthesis. In terms of biological role, catalyzes the conversion of glucose-1-phosphate and dTTP to dTDP-glucose and pyrophosphate. Involved in the biosynthesis of the dTDP-L-rhamnose which is a component of the critical linker, D-N-acetylglucosamine-L-rhamnose disaccharide, which connects the galactan region of arabinogalactan to peptidoglycan via a phosphodiester linkage. This Mycolicibacterium smegmatis (strain ATCC 700084 / mc(2)155) (Mycobacterium smegmatis) protein is Glucose-1-phosphate thymidylyltransferase (rmlA).